Consider the following 396-residue polypeptide: Elongation factor Tu (396 aa).

Residues 10 to 206 (KPHCNIGTIG…AVDAYIPQPE (197 aa)) enclose the tr-type G domain. The tract at residues 19-26 (GHVDHGKT) is G1. Residue 19–26 (GHVDHGKT) coordinates GTP. T26 provides a ligand contact to Mg(2+). Residues 60–64 (GITIS) form a G2 region. The interval 81 to 84 (DCPG) is G3. GTP-binding positions include 81-85 (DCPGH) and 136-139 (NKVD). The G4 stretch occupies residues 136–139 (NKVD). The interval 174–176 (SAL) is G5.

This sequence belongs to the TRAFAC class translation factor GTPase superfamily. Classic translation factor GTPase family. EF-Tu/EF-1A subfamily. In terms of assembly, monomer.

It is found in the cytoplasm. The enzyme catalyses GTP + H2O = GDP + phosphate + H(+). Its function is as follows. GTP hydrolase that promotes the GTP-dependent binding of aminoacyl-tRNA to the A-site of ribosomes during protein biosynthesis. The chain is Elongation factor Tu from Gluconacetobacter diazotrophicus (strain ATCC 49037 / DSM 5601 / CCUG 37298 / CIP 103539 / LMG 7603 / PAl5).